A 149-amino-acid chain; its full sequence is Pleckstrin homology domain-containing family J member 1 (149 aa).

The region spanning 15–108 is the PH domain; that stretch reads PAEMAAELGM…WMEALRRASY (94 aa).

In terms of tissue distribution, expressed in testis and liver.

The chain is Pleckstrin homology domain-containing family J member 1 (PLEKHJ1) from Homo sapiens (Human).